A 459-amino-acid polypeptide reads, in one-letter code: Argininosuccinate lyase (459 aa).

This sequence belongs to the lyase 1 family. Argininosuccinate lyase subfamily.

It localises to the cytoplasm. The enzyme catalyses 2-(N(omega)-L-arginino)succinate = fumarate + L-arginine. The protein operates within amino-acid biosynthesis; L-arginine biosynthesis; L-arginine from L-ornithine and carbamoyl phosphate: step 3/3. The polypeptide is Argininosuccinate lyase (Prochlorococcus marinus (strain MIT 9301)).